A 93-amino-acid polypeptide reads, in one-letter code: Small ribosomal subunit protein uS19 (93 aa).

Belongs to the universal ribosomal protein uS19 family.

Its function is as follows. Protein S19 forms a complex with S13 that binds strongly to the 16S ribosomal RNA. The chain is Small ribosomal subunit protein uS19 from Ruminiclostridium cellulolyticum (strain ATCC 35319 / DSM 5812 / JCM 6584 / H10) (Clostridium cellulolyticum).